The primary structure comprises 237 residues: Phosphoribosylaminoimidazole-succinocarboxamide synthase (237 aa).

The protein belongs to the SAICAR synthetase family.

It carries out the reaction 5-amino-1-(5-phospho-D-ribosyl)imidazole-4-carboxylate + L-aspartate + ATP = (2S)-2-[5-amino-1-(5-phospho-beta-D-ribosyl)imidazole-4-carboxamido]succinate + ADP + phosphate + 2 H(+). It functions in the pathway purine metabolism; IMP biosynthesis via de novo pathway; 5-amino-1-(5-phospho-D-ribosyl)imidazole-4-carboxamide from 5-amino-1-(5-phospho-D-ribosyl)imidazole-4-carboxylate: step 1/2. This chain is Phosphoribosylaminoimidazole-succinocarboxamide synthase, found in Listeria innocua serovar 6a (strain ATCC BAA-680 / CLIP 11262).